The chain runs to 105 residues: Mini zinc finger protein 2 (105 aa).

The tract at residues 1 to 29 (MGPQQDRSAAKPYANGSTAAAAAAGRKEN) is disordered. The ZF-HD dimerization-type; degenerate zinc finger occupies 35–84 (YRECQRNHAASIGGHAVDGCREFMASGADGTAAALLCAACGCHQSFHRRE).

Homo- and heterodimers.

It is found in the cytoplasm. In terms of biological role, inhibits zinc finger homeodomain (ZHD) transcription factors, by interacting with them to prevent both their nuclear localization and their DNA-binding properties. This is Mini zinc finger protein 2 (MIF2) from Oryza sativa subsp. indica (Rice).